Here is a 119-residue protein sequence, read N- to C-terminus: NADH-ubiquinone oxidoreductase chain 3 (119 aa).

3 helical membrane-spanning segments follow: residues 8–28 (IFIYLVISLLVSLILLGVPFL), 63–83 (LVSILFLIFDLEVTFFFPWAV), and 88–108 (IDLFGFWSMMAFLFILTIGFL).

Belongs to the complex I subunit 3 family.

It is found in the mitochondrion membrane. The enzyme catalyses a ubiquinone + NADH + 5 H(+)(in) = a ubiquinol + NAD(+) + 4 H(+)(out). In terms of biological role, core subunit of the mitochondrial membrane respiratory chain NADH dehydrogenase (Complex I) that is believed to belong to the minimal assembly required for catalysis. Complex I functions in the transfer of electrons from NADH to the respiratory chain. The immediate electron acceptor for the enzyme is believed to be ubiquinone. The chain is NADH-ubiquinone oxidoreductase chain 3 (ND3) from Brassica napus (Rape).